Consider the following 868-residue polypeptide: Protein translocase subunit SecA (868 aa).

Residues Gln88, Gly106–Thr110, and Asp509 each bind ATP. Positions Asn816 to Gln827 are enriched in polar residues. The tract at residues Asn816–Ala868 is disordered. The Zn(2+) site is built by Cys845, Cys847, Cys856, and His857.

The protein belongs to the SecA family. As to quaternary structure, monomer and homodimer. Part of the essential Sec protein translocation apparatus which comprises SecA, SecYEG and auxiliary proteins SecDF-YajC and YidC. Requires Zn(2+) as cofactor.

It is found in the cell inner membrane. It localises to the cytoplasm. It carries out the reaction ATP + H2O + cellular proteinSide 1 = ADP + phosphate + cellular proteinSide 2.. Part of the Sec protein translocase complex. Interacts with the SecYEG preprotein conducting channel. Has a central role in coupling the hydrolysis of ATP to the transfer of proteins into and across the cell membrane, serving as an ATP-driven molecular motor driving the stepwise translocation of polypeptide chains across the membrane. This chain is Protein translocase subunit SecA, found in Campylobacter concisus (strain 13826).